A 185-amino-acid chain; its full sequence is MGITHELDIFLVSEDIAMKHVELHKGNSYGCVLNIKSSCRKQMKIIFVLKPDWTEIDSIKPIQMEADGIYIDVTIIKQSFYEVIYCSNFTIYGDSVINIFSDIDRCTKEKYPIININIDKKKYEIIESGYTYIYIQSPIDKEDKLTYMRDDYVDEYNSSDDDCIDYYDCDYDDDDNNDAEDEDEE.

This sequence belongs to the poxviridae C7 protein family.

In terms of biological role, plays a role for multiplication of the virus in different cell types. In Swinepox virus (strain Kasza) (SWPV), this protein is Probable host range protein 2.